A 158-amino-acid polypeptide reads, in one-letter code: MAIFEGSFTSASTLKVGIVIARFNDLITNKILSGCLDCLKRHGLDTSELSNQVDIVWVPGSFELPIAAKTLMKKKSYDVVIALGAVIRGETSHYDVVISEASKGISQVSNENNVPIIFGVLTTDTMQQALERAGIKNNLGWNYALQAIEMGSLIKNLN.

5-amino-6-(D-ribitylamino)uracil is bound by residues Phe23, 61–63, and 85–87; these read SFE and AVI. 90–91 lines the (2S)-2-hydroxy-3-oxobutyl phosphate pocket; sequence ET. The Proton donor role is filled by His93. Phe118 is a 5-amino-6-(D-ribitylamino)uracil binding site. Arg132 contributes to the (2S)-2-hydroxy-3-oxobutyl phosphate binding site.

It belongs to the DMRL synthase family.

The enzyme catalyses (2S)-2-hydroxy-3-oxobutyl phosphate + 5-amino-6-(D-ribitylamino)uracil = 6,7-dimethyl-8-(1-D-ribityl)lumazine + phosphate + 2 H2O + H(+). The protein operates within cofactor biosynthesis; riboflavin biosynthesis; riboflavin from 2-hydroxy-3-oxobutyl phosphate and 5-amino-6-(D-ribitylamino)uracil: step 1/2. Its function is as follows. Catalyzes the formation of 6,7-dimethyl-8-ribityllumazine by condensation of 5-amino-6-(D-ribitylamino)uracil with 3,4-dihydroxy-2-butanone 4-phosphate. This is the penultimate step in the biosynthesis of riboflavin. This chain is 6,7-dimethyl-8-ribityllumazine synthase, found in Prochlorococcus marinus (strain MIT 9312).